We begin with the raw amino-acid sequence, 312 residues long: MRVILAPMQGVLDPFVRQLLTQVNQYDLCVSEFVRVVDQLLPTKVFYRLCPELYQQGLTASGTPVRVQLLGQHPQWLAENAQRAIELGSHGIDLNCGCPSKTVNGSNGGASLLKQPELIYHATKALRAAVPKALPVSVKVRLGWDNSEQAFEIADAVQQGGATEITIHGRTKMDGYRADRINWAKINDVRQRLSIPVIANGEIWDWQSGQACLAETGCQDLMIGRGALNIPNLSQVVKFNQAKMPWAEVLILLHQYAHTENQFDTGFYHVARIKQWLGYLKKAYPQADALFQLIKTCHDGQALRMKIDGVMN.

FMN-binding positions include 7-9 (PMQ) and glutamine 68. Cysteine 98 serves as the catalytic Proton donor. FMN is bound by residues lysine 139, 200-202 (NGE), and 224-225 (GR).

Belongs to the Dus family. DusC subfamily. It depends on FMN as a cofactor.

It catalyses the reaction 5,6-dihydrouridine(16) in tRNA + NADP(+) = uridine(16) in tRNA + NADPH + H(+). It carries out the reaction 5,6-dihydrouridine(16) in tRNA + NAD(+) = uridine(16) in tRNA + NADH + H(+). Its function is as follows. Catalyzes the synthesis of 5,6-dihydrouridine (D), a modified base found in the D-loop of most tRNAs, via the reduction of the C5-C6 double bond in target uridines. Specifically modifies U16 in tRNAs. In Pasteurella multocida (strain Pm70), this protein is tRNA-dihydrouridine(16) synthase.